The following is a 572-amino-acid chain: Sialate:O-sulfotransferase 2 (572 aa).

The Cytoplasmic segment spans residues Met-1 to Arg-18. A helical; Signal-anchor for type II membrane protein transmembrane segment spans residues Phe-19 to Phe-39. The Extracellular segment spans residues Ser-40–Arg-572. 2 consecutive WSC domains span residues Arg-134–Glu-226 and Ser-237–Gln-331. Residues Asn-196, Asn-249, Asn-262, and Asn-561 are each glycosylated (N-linked (GlcNAc...) asparagine).

This sequence belongs to the WSCD family.

It is found in the golgi apparatus membrane. In terms of biological role, sialate:O-sulfotransferase which catalyzes 8-O-sulfation at the Sia-glycan level using 3'-phosphoadenosine 5'-phosphosulfate (PAPS) as a donor, forming 8-O-sulfated Sia (Sia8S)-glycans. This is Sialate:O-sulfotransferase 2 (wscd2) from Danio rerio (Zebrafish).